The chain runs to 514 residues: Glutamate--cysteine ligase, chloroplastic (514 aa).

The N-terminal 55 residues, 1 to 55 (MALLSQAGGAYTVPSGHVSSRTGTKTVSGCVNVLRMKETYVSSYSRTLSTKSMLK), are a transit peptide targeting the chloroplast. Cystine bridges form between C178-C398 and C341-C356.

It belongs to the carboxylate-amine ligase family. Glutamate--cysteine ligase type 2 subfamily. Homodimer or monomer when oxidized or reduced, respectively. The Cys-178-Cys-398 disulfide bridge is known to modulate the enzyme activity according to the redox status. The oxidized form constitutes the active enzyme.

The protein localises to the plastid. It localises to the chloroplast. It catalyses the reaction L-cysteine + L-glutamate + ATP = gamma-L-glutamyl-L-cysteine + ADP + phosphate + H(+). It functions in the pathway sulfur metabolism; glutathione biosynthesis; glutathione from L-cysteine and L-glutamate: step 1/2. Functionally, participates in the detoxification process. In Brassica juncea (Indian mustard), this protein is Glutamate--cysteine ligase, chloroplastic (GSH1).